The sequence spans 552 residues: Keratin, type II cytoskeletal 6A (552 aa).

The span at 1-14 (MSTKTVIRSQTSHR) shows a compositional bias: polar residues. The segment at 1-21 (MSTKTVIRSQTSHRGFSAGSA) is disordered. The tract at residues 1 to 151 (MSTKTVIRSQ…DPTIQRVRTE (151 aa)) is head. The interval 152–187 (EREQIKTLNNKFASFIDKVRFLEQQNKVLDTKWALL) is coil 1A. The region spanning 152–465 (EREQIKTLNN…TLLEGEECRL (314 aa)) is the IF rod domain. The segment at 188–206 (QEQGTKTVRQGLETLFEQY) is linker 1. The coil 1B stretch occupies residues 207 to 298 (INDLRKELDN…ALYEAELSQM (92 aa)). Residues 299–322 (QTHISDTSVVLSMDNNRSLDLDSI) are linker 12. Positions 323–461 (IAEVKAQYEE…ATYRTLLEGE (139 aa)) are coil 2. Positions 462–552 (ECRLNGEGVG…TSSTRKSYRP (91 aa)) are tail. The interval 524–552 (ISSGLSSSGGSSSTIKYTTTSSTRKSYRP) is disordered. Residues 525 to 552 (SSGLSSSGGSSSTIKYTTTSSTRKSYRP) show a composition bias toward low complexity.

This sequence belongs to the intermediate filament family. Heterodimer of a type I and a type II keratin. KRT6 isomers associate with KRT16 and/or KRT17. Interacts with TCHP.

Epidermis-specific type I keratin involved in wound healing. Involved in the activation of follicular keratinocytes after wounding, while it does not play a major role in keratinocyte proliferation or migration. Participates in the regulation of epithelial migration by inhibiting the activity of SRC during wound repair. The chain is Keratin, type II cytoskeletal 6A (Krt6a) from Rattus norvegicus (Rat).